The sequence spans 83 residues: Small ribosomal subunit protein bS16 (83 aa).

This sequence belongs to the bacterial ribosomal protein bS16 family.

The protein is Small ribosomal subunit protein bS16 of Acinetobacter baumannii (strain AB307-0294).